An 806-amino-acid polypeptide reads, in one-letter code: Protein bimA (806 aa).

TPR repeat units follow at residues 76–109 and 127–160; these read LGCS…WTSR and AAVL…NPFM. Disordered stretches follow at residues 202–348, 353–372, and 401–460; these read VLPP…HRLG, TVSG…QGVG, and REVK…ASSK. The segment covering 224 to 237 has biased composition (polar residues); the sequence is AGTTRSDSTSTHGS. Residues 246–257 are compositionally biased toward low complexity; it reads GSTVSVASSGTG. The interval 260–399 is bimA domain; the sequence is LPREGMETPG…ISSTALGVKE (140 aa). Over residues 328–348 the composition is skewed to basic and acidic residues; that stretch reads TKFESDEGHTERDAGMGHRLG. A compositionally biased stretch (polar residues) spans 408–421; it reads TTGNKARTTTSSNV. Positions 432 to 445 are enriched in basic and acidic residues; sequence HAGEIHDGDSKEYR. Low complexity predominate over residues 446–459; the sequence is GTSSTSNGSQNASS. TPR repeat units lie at residues 513–546, 581–614, 616–648, 649–682, 684–716, and 751–784; these read PWVL…APSR, PEAW…DPHF, YGFT…DSRH, YNAW…NPSN, VLIC…APHS, and ANVH…DPKA.

The protein belongs to the APC3/CDC27 family.

It localises to the nucleus. Required for the completion of mitosis in Aspergillus nidulans. This is Protein bimA (bimA) from Emericella nidulans (strain FGSC A4 / ATCC 38163 / CBS 112.46 / NRRL 194 / M139) (Aspergillus nidulans).